A 281-amino-acid chain; its full sequence is tRNA pseudouridine synthase A (281 aa).

The active-site Nucleophile is the D55. Y110 is a binding site for substrate.

The protein belongs to the tRNA pseudouridine synthase TruA family.

It catalyses the reaction uridine(38/39/40) in tRNA = pseudouridine(38/39/40) in tRNA. Functionally, formation of pseudouridine at positions 38, 39 and 40 in the anticodon stem and loop of transfer RNAs. In Methanocorpusculum labreanum (strain ATCC 43576 / DSM 4855 / Z), this protein is tRNA pseudouridine synthase A.